The primary structure comprises 357 residues: Protein BIG GRAIN 1-like A (357 aa).

2 disordered regions span residues M1 to G146 and S208 to K233. Basic and acidic residues predominate over residues D75–R87. Composition is skewed to low complexity over residues H88–S104 and K112–P127. Positions R129 to V139 are enriched in polar residues. Low complexity predominate over residues S208–S223.

It belongs to the BIG GRAIN 1 (BG1) plant protein family.

The protein resides in the cell membrane. Functionally, involved in auxin transport. Regulator of the auxin signaling pathway. This Arabidopsis thaliana (Mouse-ear cress) protein is Protein BIG GRAIN 1-like A.